We begin with the raw amino-acid sequence, 87 residues long: Small ribosomal subunit protein bS20 (87 aa).

The interval 1–28 (MANSAQARKRARQASAQRDHNMSQRSEL) is disordered. The segment covering 17-28 (QRDHNMSQRSEL) has biased composition (basic and acidic residues).

This sequence belongs to the bacterial ribosomal protein bS20 family.

Its function is as follows. Binds directly to 16S ribosomal RNA. The polypeptide is Small ribosomal subunit protein bS20 (Thiobacillus denitrificans (strain ATCC 25259 / T1)).